A 282-amino-acid chain; its full sequence is Endochitinase 4 (282 aa).

The GH18 domain maps to 1-282 (GAKNGVHPPL…TWSINWDGSK (282 aa)). The active-site Proton donor is Glu-112. A glycan (N-linked (GlcNAc...) asparagine) is linked at Asn-265.

It belongs to the glycosyl hydrolase 18 family. Chitinase class V subfamily.

The protein resides in the secreted. It carries out the reaction Random endo-hydrolysis of N-acetyl-beta-D-glucosaminide (1-&gt;4)-beta-linkages in chitin and chitodextrins.. Functionally, secreted chitinase involved in the degradation of chitin, a component of the cell walls of fungi and exoskeletal elements of some animals (including worms and arthropods). Participates in the infection process and directly acts in the penetration process of the host cuticle. This is Endochitinase 4 (chi4) from Metarhizium anisopliae (Entomophthora anisopliae).